Here is a 121-residue protein sequence, read N- to C-terminus: Chorion protein S15 (121 aa).

A signal peptide spans 1-18; the sequence is MKYLFVCVSLALFAYISA.

Belongs to the chorion protein S15/S18 family.

The protein localises to the secreted. Its function is as follows. Chorion membrane (egg shell) protein; plays a role in protecting the egg from the environment. This Drosophila subobscura (Fruit fly) protein is Chorion protein S15 (Cp15).